The sequence spans 376 residues: Decapping nuclease RAI1 (376 aa).

Glu-168 serves as a coordination point for a divalent metal cation. Cys-200 and Glu-217 together coordinate substrate. 3 residues coordinate a divalent metal cation: Asp-219, Glu-237, and Leu-238. Substrate is bound by residues Lys-239 and Gln-263.

Belongs to the DXO/Dom3Z family. In terms of assembly, interacts with RAT1; the interaction is direct, stabilizes RAT1 protein structure and stimulates its exoribonuclease activity. The interaction also stimulates RAI1 pyrophosphohydrolase activity, probably by recruiting it to mRNA substrates. A divalent metal cation serves as cofactor.

It is found in the nucleus. It catalyses the reaction a 5'-end NAD(+)-phospho-ribonucleoside in mRNA + H2O = a 5'-end phospho-ribonucleoside in mRNA + NAD(+) + H(+). The catalysed reaction is a 5'-end (N(7)-methyl 5'-triphosphoguanosine)-ribonucleoside-ribonucleotide in mRNA + H2O = a (N(7)-methyl 5'-triphosphoguanosine)-nucleoside + a 5'-end phospho-ribonucleoside in mRNA + H(+). It carries out the reaction a 5'-end triphospho-ribonucleoside in mRNA + H2O = a 5'-end phospho-ribonucleoside in mRNA + diphosphate + H(+). Its function is as follows. Decapping enzyme for NAD-capped RNAs: specifically hydrolyzes the nicotinamide adenine dinucleotide (NAD) cap from a subset of RNAs by removing the entire NAD moiety from the 5'-end of an NAD-capped RNA. The NAD-cap is present at the 5'-end of some RNAs and snoRNAs. In contrast to the canonical 5'-end N7 methylguanosine (m7G) cap, the NAD cap promotes mRNA decay. Also acts as a non-canonical decapping enzyme that removes the entire cap structure of m7G capped or incompletely capped RNAs. Has decapping activity toward incomplete 5'-end m7G cap mRNAs such as unmethylated 5'-end-capped RNA (cap0), while it has no activity toward 2'-O-ribose methylated m7G cap (cap1). Also possesses RNA 5'-pyrophosphohydrolase activity by hydrolyzing the 5'-end triphosphate to release pyrophosphates. Stimulates exoribonuclease activity of Rat1, allowing it to degrade RNAs with stable secondary structure more effectively. This chain is Decapping nuclease RAI1 (RAI1), found in Gibberella zeae (strain ATCC MYA-4620 / CBS 123657 / FGSC 9075 / NRRL 31084 / PH-1) (Wheat head blight fungus).